The primary structure comprises 49 residues: uncharacterized protein (49 aa).

Positions 1–22 are cleaved as a signal peptide; the sequence is MKLNAFHLVVVVLIVSIFSVSS.

The protein resides in the secreted. This is an uncharacterized protein from Dictyostelium discoideum (Social amoeba).